The sequence spans 956 residues: uncharacterized protein (956 aa).

The region spanning 40–141 (PATKVSIDKI…IYCMTKAREA (102 aa)) is the Fibronectin type-III domain. 2 disordered regions span residues 152–173 (RNTI…PAPL) and 488–600 (NNGD…SYSH). Polar residues-rich tracts occupy residues 153–165 (NTIT…QPRN) and 488–523 (NNGD…SRTG). Residue Thr154 is modified to Phosphothreonine. 2 positions are modified to phosphoserine: Ser501 and Ser520. The segment covering 524-543 (SIDLISNNNKSINNSNADSA) has biased composition (low complexity). Residues 552–563 (VSYSPSNEPIQP) are compositionally biased toward polar residues. The span at 564 to 574 (SSSLLSQLTQD) shows a compositional bias: low complexity. Residues 578-599 (RSMLSNHISSNNENKQQPSSYS) show a composition bias toward polar residues. A phosphoserine mark is found at Ser802, Ser842, and Ser895. The disordered stretch occupies residues 875–956 (VGPKVPAKEP…NLFNPHSHDS (82 aa)). Residues 895–904 (SNSSISSAWS) show a composition bias toward low complexity.

This is an uncharacterized protein from Saccharomyces cerevisiae (strain ATCC 204508 / S288c) (Baker's yeast).